The primary structure comprises 279 residues: GDT1-like protein 3 (279 aa).

A signal peptide spans 1-23 (MDPNPRLLILLVLLAFSATVAVA). Helical transmembrane passes span 64-84 (VGPG…VSEI), 103-123 (IVLS…TGLG), 135-155 (TNSA…YIAW), 186-206 (FFGR…FLAE), 224-244 (AIGV…LAVI), and 258-278 (VATI…FYPP).

This sequence belongs to the GDT1 family.

Its subcellular location is the membrane. The polypeptide is GDT1-like protein 3 (Oryza sativa subsp. japonica (Rice)).